The sequence spans 265 residues: Tryptophan synthase alpha chain (265 aa).

Active-site proton acceptor residues include Glu-49 and Asp-60.

It belongs to the TrpA family. In terms of assembly, tetramer of two alpha and two beta chains.

It carries out the reaction (1S,2R)-1-C-(indol-3-yl)glycerol 3-phosphate + L-serine = D-glyceraldehyde 3-phosphate + L-tryptophan + H2O. It functions in the pathway amino-acid biosynthesis; L-tryptophan biosynthesis; L-tryptophan from chorismate: step 5/5. Functionally, the alpha subunit is responsible for the aldol cleavage of indoleglycerol phosphate to indole and glyceraldehyde 3-phosphate. The sequence is that of Tryptophan synthase alpha chain from Polynucleobacter necessarius subsp. necessarius (strain STIR1).